Reading from the N-terminus, the 746-residue chain is MAPMLVSLNCGIRVQRRTLTLLIRQTSSYHIWDKSCINNGTNYQRRRTYALNSLHPQRTASWSTNRTENRRQILEAAKHLQVTDKRTCWHGNAGGRLNADPKNVLKEVHSAKILSAMLSYVWPKDRPDLRARVAVSLGLLAGAKLTNVMVPFMFKYAVDELNQMSGHMLNLNDAPSTVATMTTAVLIGYGVSRAGSALFNELRNTVFGKVAQSSIRRIAKNVFLHLHNLDLGFHLSRQTGALSKAIDRGTRGISFVLSALVFNLGPTVFEMFLVSAILYYKCGGEFAAVALGTLSAYTIFTILVTQWRTRFRIEMNKADNEAGNAAIDSLLNYETVKYFNNEKYEAERYDGYLKLYESSSLKTTSTLAMLNFGQSAIFSVGLTAIMLLASKGIAAGNMTVGDLVMVNGLLFQLSLPLNFLGTVYRETRQALIDMNTLFTLLNVDTKIKEKDLAPPLAVTPQDATIRFEDVYFEYMEGQKVLNGVSFEVPAGKKVAIVGGSGSGKSTIVRLLFRFYEPQQGNIYISGQNIRDVSLESLRKALGVVPQDAVLFHNNIFYNLQYGNINATPEEVYQVARLAGLHDAILRMPHGYDTQVGERGLKLSGGEKQRVAIARAILKNPPILLYDEATSSLDSITEENIMTSMKEMVKDRTSVFIAHRLSTIVDADEILVLSQGKVAERGTHQALLDTPGSLYAELWNAQNSKILNSRKSSSAPAAERLSQKEEERKKLQEEILNSVKGCGNCSC.

A mitochondrion-targeting transit peptide spans 1 to 19 (MAPMLVSLNCGIRVQRRTL). The Mitochondrial matrix segment spans residues 20 to 133 (TLLIRQTSSY…KDRPDLRARV (114 aa)). In terms of domain architecture, ABC transmembrane type-1 spans 133–429 (VAVSLGLLAG…LGTVYRETRQ (297 aa)). The chain crosses the membrane as a helical span at residues 134 to 154 (AVSLGLLAGAKLTNVMVPFMF). Topologically, residues 155-176 (KYAVDELNQMSGHMLNLNDAPS) are mitochondrial intermembrane. Residues 177 to 199 (TVATMTTAVLIGYGVSRAGSALF) traverse the membrane as a helical segment. Topologically, residues 200–252 (NELRNTVFGKVAQSSIRRIAKNVFLHLHNLDLGFHLSRQTGALSKAIDRGTRG) are mitochondrial matrix. The helical transmembrane segment at 253–273 (ISFVLSALVFNLGPTVFEMFL) threads the bilayer. Topologically, residues 274–283 (VSAILYYKCG) are mitochondrial intermembrane. The helical transmembrane segment at 284–304 (GEFAAVALGTLSAYTIFTILV) threads the bilayer. Topologically, residues 305–375 (TQWRTRFRIE…TLAMLNFGQS (71 aa)) are mitochondrial matrix. Residues 308 to 312 (RTRFR) and 371 to 374 (NFGQ) each bind glutathione. A helical membrane pass occupies residues 376 to 396 (AIFSVGLTAIMLLASKGIAAG). Topologically, residues 397–402 (NMTVGD) are mitochondrial intermembrane. A helical transmembrane segment spans residues 403–423 (LVMVNGLLFQLSLPLNFLGTV). Residue Gly-421 participates in glutathione binding. Residues 424 to 746 (YRETRQALID…SVKGCGNCSC (323 aa)) lie on the Mitochondrial matrix side of the membrane. An ABC transporter domain is found at 465–699 (IRFEDVYFEY…PGSLYAELWN (235 aa)). ATP is bound by residues Tyr-474 and 498–505 (GGSGSGKS). Residues 708–728 (SRKSSSAPAAERLSQKEEERK) form a disordered region.

Belongs to the ABC transporter superfamily. ABCB family. Heavy Metal importer (TC 3.A.1.210) subfamily. In terms of assembly, homodimer.

Its subcellular location is the mitochondrion inner membrane. The protein localises to the mitochondrion. It catalyses the reaction (glutathione)4[2Fe(III)-2S] cluster(in) + ATP + H2O = (glutathione)4[2Fe(III)-2S] cluster(out) + ADP + phosphate + H(+). Exports glutathione-coordinated iron-sulfur clusters such as [2Fe-2S]-(GS)4 cluster from the mitochondria to the cytosol in an ATP-dependent manner allowing the assembly of the cytosolic iron-sulfur (Fe/S) cluster-containing proteins and participates in iron homeostasis. May play a role in iron and lipid metabolism. In Oryzias latipes (Japanese rice fish), this protein is Iron-sulfur clusters transporter ABCB7, mitochondrial.